The sequence spans 35 residues: MEALVYTFLLVSTLGIIFFAIFFREPPKVPTKKAK.

A helical transmembrane segment spans residues 3–23 (ALVYTFLLVSTLGIIFFAIFF).

Belongs to the PsbT family. PSII is composed of 1 copy each of membrane proteins PsbA, PsbB, PsbC, PsbD, PsbE, PsbF, PsbH, PsbI, PsbJ, PsbK, PsbL, PsbM, PsbT, PsbY, PsbZ, Psb30/Ycf12, at least 3 peripheral proteins of the oxygen-evolving complex and a large number of cofactors. It forms dimeric complexes.

It is found in the plastid. It localises to the chloroplast thylakoid membrane. Found at the monomer-monomer interface of the photosystem II (PS II) dimer, plays a role in assembly and dimerization of PSII. PSII is a light-driven water plastoquinone oxidoreductase, using light energy to abstract electrons from H(2)O, generating a proton gradient subsequently used for ATP formation. In Cabomba caroliniana (Carolina fanwort), this protein is Photosystem II reaction center protein T.